A 173-amino-acid chain; its full sequence is Putative phosphoesterase GK0864 (173 aa).

H34 (proton donor) is an active-site residue. 2 consecutive short sequence motifs (HXTX) follow at residues 34 to 37 and 115 to 118; these read HITL and HITI. Catalysis depends on H115, which acts as the Proton acceptor.

This sequence belongs to the 2H phosphoesterase superfamily. YjcG family.

The protein is Putative phosphoesterase GK0864 of Geobacillus kaustophilus (strain HTA426).